The following is an 89-amino-acid chain: Small ribosomal subunit protein uS15 (89 aa).

Belongs to the universal ribosomal protein uS15 family. In terms of assembly, part of the 30S ribosomal subunit. Forms a bridge to the 50S subunit in the 70S ribosome, contacting the 23S rRNA.

Functionally, one of the primary rRNA binding proteins, it binds directly to 16S rRNA where it helps nucleate assembly of the platform of the 30S subunit by binding and bridging several RNA helices of the 16S rRNA. Forms an intersubunit bridge (bridge B4) with the 23S rRNA of the 50S subunit in the ribosome. In Chlorobium phaeovibrioides (strain DSM 265 / 1930) (Prosthecochloris vibrioformis (strain DSM 265)), this protein is Small ribosomal subunit protein uS15.